The sequence spans 698 residues: MNPSEMQRKAPPRRRRHRNRAPLTHKMNKMVTSEEQMKLPSTKKAEPPTWAQLKKLTQLATKYLENTKVTQTPESMLLAALMIVSMVVSLPMPAGAAAANYTNWAYVPFPPLIRAVTWMDNPIEVYVNDSVWVPGPIDDRCPAKPEEEGMMINISIGYRYPICLGRAPGCLMPAVQNWLVEVPIVSPICRFTYHMVSGMSLRPRVNYLQDFSYQRSLKFRPKGKPCPKEIPKESKNTEVLVWEECVANSAVILQNNEFGTIIDWTPQGQFYHNCSGQTQSCPSAQVSPAVDSDLTESLDKHKHKKLQSFYPWEWGEKGISTPRPKIISPVSGPEHPELWRLTVASHHIRIWSGNQTLETRDRKPFYTVDLNSSLTLPLQSCVKPPYMLVVGNIVIKPDSQTITCENCRLLTCIDSTFNWQHRILLVRAREGVWIPVSMDRPWEASPSIHILTEVLKGVLNRSKRFIFTLIAVIMGLIAVTATAAVAGVALHSSVQSVNFVNDGQKNSTRLWNSQSSIDQKLANQINDLRQTVIWMGDRLMSLEHRFQLQCDWNTSDFCITPQIYNESEHHWDMVRRHLQGREDNLTLDISKLKEQIFEASKAHLNLVPGTEAIAGVADGLANLNPVTWVKTIGSTTIINLILILVCLFCLLLVCRCTQQLRRDSDHRERAMMTMAVLSKRKGGNVGKSKRDQIVTVSV.

A disordered region spans residues 1-47 (MNPSEMQRKAPPRRRRHRNRAPLTHKMNKMVTSEEQMKLPSTKKAEP). The signal sequence occupies residues 1-89 (MNPSEMQRKA…ALMIVSMVVS (89 aa)). A compositionally biased stretch (basic residues) spans 10-20 (APPRRRRHRNR). Residues 90–631 (LPMPAGAAAA…NLNPVTWVKT (542 aa)) are Extracellular-facing. N-linked (GlcNAc...) asparagine glycosylation is found at asparagine 100, asparagine 128, asparagine 153, asparagine 273, asparagine 354, asparagine 371, and asparagine 460. The interval 465 to 485 (FIFTLIAVIMGLIAVTATAAV) is fusion peptide. Residues asparagine 506, asparagine 553, asparagine 565, and asparagine 584 are each glycosylated (N-linked (GlcNAc...) asparagine). Residues 632–652 (IGSTTIINLILILVCLFCLLL) form a helical membrane-spanning segment. Topologically, residues 653-698 (VCRCTQQLRRDSDHRERAMMTMAVLSKRKGGNVGKSKRDQIVTVSV) are cytoplasmic.

This sequence belongs to the beta type-B retroviral envelope protein family. HERV class-II K(HML-2) env subfamily. As to quaternary structure, the surface (SU) and transmembrane (TM) proteins form a heterodimer. SU and TM are attached by noncovalent interactions or by a labile interchain disulfide bond. Post-translationally, specific enzymatic cleavages in vivo yield the mature SU and TM proteins.

It is found in the cell membrane. The protein localises to the virion. Its function is as follows. Retroviral envelope proteins mediate receptor recognition and membrane fusion during early infection. Endogenous envelope proteins may have kept, lost or modified their original function during evolution. This endogenous envelope protein has lost its original fusogenic properties. SU mediates receptor recognition. Functionally, TM anchors the envelope heterodimer to the viral membrane through one transmembrane domain. The other hydrophobic domain, called fusion peptide, mediates fusion of the viral membrane with the target cell membrane. In Homo sapiens (Human), this protein is Endogenous retrovirus group K member 9 Env polyprotein (ERVK-9).